A 277-amino-acid polypeptide reads, in one-letter code: 2,3,4,5-tetrahydropyridine-2,6-dicarboxylate N-succinyltransferase (277 aa).

Positions 106 and 143 each coordinate substrate.

This sequence belongs to the transferase hexapeptide repeat family. In terms of assembly, homotrimer.

Its subcellular location is the cytoplasm. It carries out the reaction (S)-2,3,4,5-tetrahydrodipicolinate + succinyl-CoA + H2O = (S)-2-succinylamino-6-oxoheptanedioate + CoA. It participates in amino-acid biosynthesis; L-lysine biosynthesis via DAP pathway; LL-2,6-diaminopimelate from (S)-tetrahydrodipicolinate (succinylase route): step 1/3. This Variovorax paradoxus (strain S110) protein is 2,3,4,5-tetrahydropyridine-2,6-dicarboxylate N-succinyltransferase.